A 487-amino-acid polypeptide reads, in one-letter code: Adenosylhomocysteinase (487 aa).

The substrate site is built by Thr76, Asp151, and Glu212. Residue 213 to 215 (TTT) participates in NAD(+) binding. 2 residues coordinate substrate: Lys242 and Asp246. Residues Asn247, 276 to 281 (GYGDVG), Glu299, Asn334, 355 to 357 (IGH), and Asn403 each bind NAD(+).

It belongs to the adenosylhomocysteinase family. It depends on NAD(+) as a cofactor.

Its subcellular location is the cytoplasm. It catalyses the reaction S-adenosyl-L-homocysteine + H2O = L-homocysteine + adenosine. It functions in the pathway amino-acid biosynthesis; L-homocysteine biosynthesis; L-homocysteine from S-adenosyl-L-homocysteine: step 1/1. Its function is as follows. May play a key role in the regulation of the intracellular concentration of adenosylhomocysteine. The protein is Adenosylhomocysteinase of Bacteroides fragilis (strain YCH46).